The chain runs to 558 residues: Methionine--tRNA ligase 1 (558 aa).

Positions 10 to 20 (PYINGIKHLGN) match the 'HIGH' region motif. The Zn(2+) site is built by C142, C145, C155, and C158. Positions 332 to 336 (KFSTS) match the 'KMSKS' region motif. ATP is bound at residue T335.

This sequence belongs to the class-I aminoacyl-tRNA synthetase family. MetG type 1 subfamily. Monomer. Zn(2+) is required as a cofactor.

It is found in the cytoplasm. It catalyses the reaction tRNA(Met) + L-methionine + ATP = L-methionyl-tRNA(Met) + AMP + diphosphate. In terms of biological role, is required not only for elongation of protein synthesis but also for the initiation of all mRNA translation through initiator tRNA(fMet) aminoacylation. The polypeptide is Methionine--tRNA ligase 1 (Acaryochloris marina (strain MBIC 11017)).